Reading from the N-terminus, the 315-residue chain is Replication factor C small subunit (315 aa).

43-50 serves as a coordination point for ATP; sequence GSPGVGKT.

It belongs to the activator 1 small subunits family. RfcS subfamily. As to quaternary structure, heteromultimer composed of small subunits (RfcS) and large subunits (RfcL).

Functionally, part of the RFC clamp loader complex which loads the PCNA sliding clamp onto DNA. This chain is Replication factor C small subunit, found in Methanococcus maripaludis (strain DSM 14266 / JCM 13030 / NBRC 101832 / S2 / LL).